We begin with the raw amino-acid sequence, 1026 residues long: Unconventional myosin-Ic (1026 aa).

M1 carries the post-translational modification N-acetylmethionine. The region spanning 12-695 (GVQDFLLLEN…TLFITEDALE (684 aa)) is the Myosin motor domain. Residues N53, Y61, 104–113 (SGESGAGKTE), and 157–161 (NDNSS) contribute to the ATP site. Position 349 is an N6-methyllysine (K349). Residues 572-594 (LAKLMDILMSKEPSYVRCIKPND) form an actin-binding region. 2 IQ domains span residues 698–727 (KQTIAVTLQKSWRGYRERANYHRIRHAVIV) and 721–750 (IRHAVIVIQSWWRGVKGRRKAKHRRQAADT). Residues 849–1024 (KDGYSRSVPK…NGHLSVTTPR (176 aa)) form the TH1 domain.

The protein belongs to the TRAFAC class myosin-kinesin ATPase superfamily. Myosin family. Interacts (via its IQ motifs) with calm.

The protein localises to the cytoplasm. It localises to the cell cortex. It is found in the cell projection. The protein resides in the ruffle membrane. Its subcellular location is the cytoplasmic vesicle. The protein localises to the stereocilium membrane. Functionally, myosins are actin-based motor molecules with ATPase activity. Unconventional myosins serve in intracellular movements. Their highly divergent tails are presumed to bind to membranous compartments, which would be moved relative to actin filaments. The protein is Unconventional myosin-Ic (myo1c) of Danio rerio (Zebrafish).